Reading from the N-terminus, the 248-residue chain is Proteasome subunit alpha (248 aa).

It belongs to the peptidase T1A family. As to quaternary structure, the 20S proteasome core is composed of 14 alpha and 14 beta subunits that assemble into four stacked heptameric rings, resulting in a barrel-shaped structure. The two inner rings, each composed of seven catalytic beta subunits, are sandwiched by two outer rings, each composed of seven alpha subunits. The catalytic chamber with the active sites is on the inside of the barrel. Has a gated structure, the ends of the cylinder being occluded by the N-termini of the alpha-subunits. Is capped by the proteasome-associated ATPase, ARC.

The protein localises to the cytoplasm. Its pathway is protein degradation; proteasomal Pup-dependent pathway. Its activity is regulated as follows. The formation of the proteasomal ATPase ARC-20S proteasome complex, likely via the docking of the C-termini of ARC into the intersubunit pockets in the alpha-rings, may trigger opening of the gate for substrate entry. Interconversion between the open-gate and close-gate conformations leads to a dynamic regulation of the 20S proteasome proteolysis activity. In terms of biological role, component of the proteasome core, a large protease complex with broad specificity involved in protein degradation. The chain is Proteasome subunit alpha from Mycobacterium bovis (strain BCG / Pasteur 1173P2).